A 365-amino-acid chain; its full sequence is MGNITADNSSMSCTIDHTIHQTLAPVVYVTVLVVGFPANCLSLYFGYLQIKARNELGVYLCNLTVADLFYICSLPFWLQYVLQHDNWSHGDLSCQVCGILLYENIYISVGFLCCISVDRYLAVAHPFRFHQFRTLKAAVGVSVVIWAKELLTSIYFLMHEEVIEDENQHRVCFEHYPIQAWQRAINYYRFLVGFLFPICLLLASYQGILRAVRRSHGTQKSRKDQIQRLVLSTVVIFLACFLPYHVLLLVRSVWEASCDFAKGVFNAYHFSLLLTSFNCVADPVLYCFVSETTHRDLARLRGACLAFLTCSRTGRAREAYPLGAPEASGKSGAQGEEPELLTKLHPAFQTPNSPGSGGFPTGRLA.

Residues 1-12 (MGNITADNSSMS) are Extracellular-facing. N-linked (GlcNAc...) asparagine glycosylation is found at N3 and N8. Residues 13–49 (CTIDHTIHQTLAPVVYVTVLVVGFPANCLSLYFGYLQ) form a helical membrane-spanning segment. 2 disulfide bridges follow: C13–C258 and C94–C172. Residues 50-53 (IKAR) are Cytoplasmic-facing. Residues 54–84 (NELGVYLCNLTVADLFYICSLPFWLQYVLQH) traverse the membrane as a helical segment. Over 85–89 (DNWSH) the chain is Extracellular. A helical membrane pass occupies residues 90 to 125 (GDLSCQVCGILLYENIYISVGFLCCISVDRYLAVAH). The Cytoplasmic portion of the chain corresponds to 126-133 (PFRFHQFR). The chain crosses the membrane as a helical span at residues 134–160 (TLKAAVGVSVVIWAKELLTSIYFLMHE). The Extracellular segment spans residues 161 to 176 (EVIEDENQHRVCFEHY). The extracellular loop 2 (ECL2) stretch occupies residues 161 to 176 (EVIEDENQHRVCFEHY). Residues 177-214 (PIQAWQRAINYYRFLVGFLFPICLLLASYQGILRAVRR) form a helical membrane-spanning segment. Residues 215 to 218 (SHGT) lie on the Cytoplasmic side of the membrane. A helical membrane pass occupies residues 219 to 254 (QKSRKDQIQRLVLSTVVIFLACFLPYHVLLLVRSVW). Topologically, residues 255–260 (EASCDF) are extracellular. Residues 261–289 (AKGVFNAYHFSLLLTSFNCVADPVLYCFV) traverse the membrane as a helical segment. Over 290–365 (SETTHRDLAR…SGGFPTGRLA (76 aa)) the chain is Cytoplasmic. Residues 345 to 365 (HPAFQTPNSPGSGGFPTGRLA) are disordered. Residues 355-365 (GSGGFPTGRLA) show a composition bias toward gly residues.

It belongs to the G-protein coupled receptor 1 family. Found at low level in a wide range of tissues, but significantly expressed in lung, kidney, bone and nervous system.

The protein localises to the cell membrane. Activated by a network of residues that connects an extracellular-facing cavity to Glu-149, a conserved charged residue buried in the transmembrane core of the receptor. Protonation likely drives conformational changes in extracellular loop 2 (ECL2), which stabilizes movement of transmembrane 3 (TM3) and a series of rearrangements that connect the extracellular-facing cavity to Glu-149, a residue only conserved in proton-sensing G-protein coupled receptors. Activated in an allosteric manner by divalent metal ions at the extracellular surface following the order: Cd(2+) &gt; Co(2+) &gt; Ni(2+) &gt; Zn(2+) &gt; Fe(2+) &gt; Ca(2+) &gt; Mg(2+). Activated by the benzodiazepine drug lorazepam, a non-selective GPR68 positive allosteric modulator. Activated by ogerin (ZINC67740571), a selective GPR68 positive allosteric modulator. Activated by small molecule MS48107, a selective positive allosteric modulator. Inhibited by small molecule ogremorphin, inducing ferroptosis in cancer cells. Proton-sensing G-protein coupled receptor activated by extracellular pH, which is required to monitor pH changes and generate adaptive reactions. The receptor is almost silent at pH 7.8 but fully activated at pH 6.8. Ligand binding causes a conformation change that triggers signaling via guanine nucleotide-binding proteins (G proteins) and modulates the activity of downstream effectors, such as phospholipase C. GPR68 is mainly coupled to G(q) G proteins and mediates production of diacylglycerol (DAG) and inositol 1,4,5-trisphosphate (IP3). Acts as a key mechanosensor of fluid shear stress and membrane stretch. Expressed in endothelial cells of small-diameter resistance arteries, where it mediates flow-induced dilation in response to shear stress. May represents an osteoblastic pH sensor regulating cell-mediated responses to acidosis in bone. Acts as a regulator of calcium-sensing receptor CASR in a seesaw manner: GPR68-mediated signaling inhibits CASR signaling in response to protons, while CASR inhibits GPR68 in presence of extracellular calcium. In Homo sapiens (Human), this protein is G-protein coupled receptor 68.